A 609-amino-acid chain; its full sequence is Pentatricopeptide repeat-containing protein At5g13770, chloroplastic (609 aa).

Residues 1–44 (MAIASGSWVATVNHHANPHSFTSPTKPIFFLSQKPHNFHVCSSR) constitute a chloroplast transit peptide. PPR repeat units lie at residues 103-137 (ELRT…KALP), 138-168 (DGQT…FRSD), 172-207 (AVSA…GVEP), 208-242 (SPGC…RLSF), 247-281 (SGSI…GIPE), 282-316 (SSEL…KLLK), 317-351 (DPEM…ELKV), 352-386 (TDCI…ECEA), 387-421 (GQVT…GFDK), 422-456 (CVVA…GCKP), 457-491 (NIWI…KVLP), 492-526 (DKVS…RGKI), and 527-561 (DRAM…GTRL).

Belongs to the PPR family. P subfamily.

Its subcellular location is the plastid. It is found in the chloroplast. The chain is Pentatricopeptide repeat-containing protein At5g13770, chloroplastic from Arabidopsis thaliana (Mouse-ear cress).